Here is a 359-residue protein sequence, read N- to C-terminus: DNA integrity scanning protein DisA (359 aa).

Residues 7 to 146 (DEVLRQTLAI…NRRYVLEGSD (140 aa)) form the DAC domain. Residues Gly74, Leu92, and 105–109 (TRHRT) contribute to the ATP site.

The protein belongs to the DisA family. Homooctamer. Mg(2+) is required as a cofactor.

The enzyme catalyses 2 ATP = 3',3'-c-di-AMP + 2 diphosphate. Participates in a DNA-damage check-point. DisA forms globular foci that rapidly scan along the chromosomes searching for lesions. In terms of biological role, also has diadenylate cyclase activity, catalyzing the condensation of 2 ATP molecules into cyclic di-AMP (c-di-AMP). c-di-AMP likely acts as a signaling molecule that may couple DNA integrity with a cellular process. The protein is DNA integrity scanning protein DisA of Kineococcus radiotolerans (strain ATCC BAA-149 / DSM 14245 / SRS30216).